Here is a 519-residue protein sequence, read N- to C-terminus: T-box transcription factor TBX5 (519 aa).

Residues 1-46 (MADTEEAYGMPDTPVEAEPKELQCEPKQDNQLGASSKTPTSPPAAF) form a disordered region. The span at 17 to 28 (AEPKELQCEPKQ) shows a compositional bias: basic and acidic residues. The segment covering 29 to 39 (DNQLGASSKTP) has biased composition (polar residues). A DNA-binding region (T-box) is located at residues 63–238 (LWLKFHEVGT…NNPFAKGFRG (176 aa)). Disordered stretches follow at residues 254 to 282 (EYPV…RNIT), 293 to 312 (CENG…SAYT), and 326 to 372 (KRKV…TSFR). Polar residues predominate over residues 262–282 (TVRQKVSSNHSPFSQETRNIT). Low complexity predominate over residues 298-309 (SSTSQDLLPSSS). A compositionally biased stretch (basic and acidic residues) spans 328 to 342 (KVSEEPAEHSYKKPY).

As to quaternary structure, monomer. Homodimer (via the T-box); binds DNA as homodimer.

The protein localises to the nucleus. Its subcellular location is the cytoplasm. In terms of biological role, DNA-binding protein that regulates the transcription of several genes and is involved in heart development and limb pattern formation. May bind to the core DNA motif of promoters. The protein is T-box transcription factor TBX5 (tbx5) of Xenopus laevis (African clawed frog).